We begin with the raw amino-acid sequence, 329 residues long: Probable aryl-alcohol dehydrogenase AAD4 (329 aa).

Tyr-30 acts as the Proton donor in catalysis. His-105 provides a ligand contact to substrate. 190–200 (DVMGGGRFQSK) serves as a coordination point for NADP(+).

The protein belongs to the aldo/keto reductase family. Aldo/keto reductase 2 subfamily.

The sequence is that of Probable aryl-alcohol dehydrogenase AAD4 (AAD4) from Saccharomyces cerevisiae (strain ATCC 204508 / S288c) (Baker's yeast).